Consider the following 53-residue polypeptide: Sec-independent protein translocase protein TatA (53 aa).

A helical membrane pass occupies residues 1–21; the sequence is MGMSFSHLLIVLLIIFVLFGA.

The protein belongs to the TatA/E family. As to quaternary structure, the Tat system comprises two distinct complexes: a TatABC complex, containing multiple copies of TatA, TatB and TatC subunits, and a separate TatA complex, containing only TatA subunits. Substrates initially bind to the TatABC complex, which probably triggers association of the separate TatA complex to form the active translocon.

The protein resides in the cell inner membrane. In terms of biological role, part of the twin-arginine translocation (Tat) system that transports large folded proteins containing a characteristic twin-arginine motif in their signal peptide across membranes. TatA could form the protein-conducting channel of the Tat system. The chain is Sec-independent protein translocase protein TatA from Rickettsia akari (strain Hartford).